Consider the following 517-residue polypeptide: Perilipin-1 (517 aa).

At serine 81 the chain carries Phosphoserine. Threonine 85 is modified (phosphothreonine). A phosphoserine mark is found at serine 126, serine 130, serine 132, serine 137, and serine 174. The interval 197–217 (VESAPSSGRQKTQKAPKAKPS) is disordered. Phosphothreonine is present on residues threonine 224, threonine 299, and threonine 301. The segment at 285–321 (HNLAASKDENHEDQTDTEGEETDEEEEEEESEAEENV) is disordered. The tract at residues 291–322 (KDENHEDQTDTEGEETDEEEEEEESEAEENVL) is required for interaction with CIDEC. The segment covering 299-319 (TDTEGEETDEEEEEEESEAEE) has biased composition (acidic residues). A phosphoserine mark is found at serine 315, serine 385, serine 387, proline 408, serine 411, serine 434, serine 436, serine 440, serine 460, serine 492, and serine 494. A disordered region spans residues 415–495 (PESEFQDIDN…KPARRVSDSF (81 aa)). Residues 483–492 (PREKPARRVS) are compositionally biased toward basic and acidic residues.

It belongs to the perilipin family. As to quaternary structure, interacts with ABHD5. Interacts with CIDEC. Interacts with AQP7. Major cAMP-dependent protein kinase substrate in adipocytes, also dephosphorylated by PP1. When phosphorylated, may be maximally sensitive to HSL. When unphosphorylated, may play a role in the inhibition of lipolysis, by acting as a barrier in lipid droplet. In terms of processing, the N-terminus is blocked. Adipocytes.

Its subcellular location is the endoplasmic reticulum. It is found in the lipid droplet. Functionally, modulator of adipocyte lipid metabolism. Coats lipid storage droplets to protect them from breakdown by hormone-sensitive lipase (HSL). Its absence may result in leanness. Plays a role in unilocular lipid droplet formation by activating CIDEC. Their interaction promotes lipid droplet enlargement and directional net neutral lipid transfer. May modulate lipolysis and triglyceride levels. The polypeptide is Perilipin-1 (Plin1) (Rattus norvegicus (Rat)).